The following is a 169-amino-acid chain: Major pepsin inhibitor 3 (169 aa).

The first 20 residues, 1 to 20 (MHVWLILSLASLWTSSIAYS), serve as a signal peptide directing secretion. Gln21 is subject to Pyrrolidone carboxylic acid. 3 cysteine pairs are disulfide-bonded: Cys33-Cys79, Cys68-Cys86, and Cys99-Cys166. A disordered region spans residues 135–169 (EEQQENQPPSSGMPHGAVPAGGLSPPPPPSFCTVQ). Residues 158–169 (SPPPPPSFCTVQ) are compositionally biased toward pro residues.

The protein belongs to the protease inhibitor I33 family. In terms of tissue distribution, body wall.

It localises to the secreted. Its function is as follows. This is an inhibitor of the aspartic protease pepsin. The chain is Major pepsin inhibitor 3 from Ascaris suum (Pig roundworm).